Consider the following 91-residue polypeptide: Succinate dehydrogenase assembly factor 1A, mitochondrial (91 aa).

The protein belongs to the complex I LYR family. SDHAF1 subfamily. Interacts with the iron-sulfur protein subunit within the SDH catalytic dimer.

It is found in the mitochondrion matrix. Plays an essential role in the assembly of succinate dehydrogenase (SDH), an enzyme complex (also referred to as respiratory complex II) that is a component of both the tricarboxylic acid (TCA) cycle and the mitochondrial electron transport chain, and which couples the oxidation of succinate to fumarate with the reduction of ubiquinone (coenzyme Q) to ubiquinol. Promotes maturation of the iron-sulfur protein subunit of the SDH catalytic dimer, protecting it from the deleterious effects of oxidants. May act together with SDHAF3. The polypeptide is Succinate dehydrogenase assembly factor 1A, mitochondrial (Dictyostelium discoideum (Social amoeba)).